We begin with the raw amino-acid sequence, 224 residues long: UPF0758 protein PD_0117 (224 aa).

The MPN domain occupies 102 to 224 (SIHDPISAGR…PVSFAEHGWL (123 aa)). Zn(2+) is bound by residues histidine 173, histidine 175, and aspartate 186. Residues 173–186 (HNHPSGNREPSPAD) carry the JAMM motif motif.

This sequence belongs to the UPF0758 family.

This chain is UPF0758 protein PD_0117, found in Xylella fastidiosa (strain Temecula1 / ATCC 700964).